The primary structure comprises 692 residues: A-type ATP synthase subunit I (692 aa).

7 consecutive transmembrane segments (helical) span residues 389-409 (GIMLTDAVYGLLLTIIGLFIW), 422-442 (LGYILTLAGISTVIMGIITGG), 494-514 (ILVFSIFVGLIHLLIGLFVGF), 531-551 (GVWILLILSIFVGIGLMFAGA), 553-573 (TMIAGGIIGIFVVLAILASMY), 602-622 (ARLLALCLATGGLAMAVNIMA), and 624-644 (LVGESIPVIGIIVAIIILLVG).

The protein belongs to the V-ATPase 116 kDa subunit family. In terms of assembly, the A-type ATPase is composed of subunits A(3), B(3), C, D, E(1 or 2), F, H(2), I and K(x).

The protein localises to the cell membrane. Its function is as follows. Component of the A-type ATP synthase that produces ATP from ADP in the presence of a proton gradient across the membrane. The sequence is that of A-type ATP synthase subunit I from Methanocaldococcus jannaschii (strain ATCC 43067 / DSM 2661 / JAL-1 / JCM 10045 / NBRC 100440) (Methanococcus jannaschii).